We begin with the raw amino-acid sequence, 436 residues long: Trigger factor (436 aa).

The 86-residue stretch at 161 to 246 (GDQLNIDFVG…VNSVSAPQLP (86 aa)) folds into the PPIase FKBP-type domain.

It belongs to the FKBP-type PPIase family. Tig subfamily.

It localises to the cytoplasm. It carries out the reaction [protein]-peptidylproline (omega=180) = [protein]-peptidylproline (omega=0). Functionally, involved in protein export. Acts as a chaperone by maintaining the newly synthesized protein in an open conformation. Functions as a peptidyl-prolyl cis-trans isomerase. This Ectopseudomonas mendocina (strain ymp) (Pseudomonas mendocina) protein is Trigger factor.